The primary structure comprises 523 residues: Katanin p60 ATPase-containing subunit A1 (523 aa).

Residues 82–215 are disordered; it reads KEAPTGRRAA…DGKSKRGLYE (134 aa). The span at 178-194 shows a compositional bias: low complexity; that stretch reads AGARSSTAGKKGAASKS. Position 279-286 (279-286) interacts with ATP; sequence GPPGTGKT.

It belongs to the AAA ATPase family. Katanin p60 subunit A1 subfamily. May homooligomerize. Component of KTN80-KTN1 complexes composed of a hexamer of KTN1-KTN80 heterodimers that sense microtubule (MT) geometry to confer precise MT severing. Interacts directly with KTN80.1, KTN80.2, KTN80.3 and KTN80.4. Can interact with KTN80.1. May interact with the kinesin related protein KIN14A. Interacts with microtubule polymers. Binds to IPGA1. As to expression, expressed ubiquitously, including siliques, flowers, leaves, stems and roots.

It localises to the cytoplasm. The protein resides in the cytoskeleton. It carries out the reaction n ATP + n H2O + a microtubule = n ADP + n phosphate + (n+1) alpha/beta tubulin heterodimers.. Its function is as follows. Severs microtubules in vitro in an ATP-dependent manner. Required for oligomerization of functional KTN80-KTN1 complexes that catalyze microtubule severing. This activity may promote rapid reorganization of cellular microtubule arrays. May be required for reorientation of cortical microtubule arrays during cellular elongation. Failure to correctly orient these arrays drastically compromises fiber length, cell wall thickness and mechanical strength. May also be required for the spatial organization of developmental cues within the root. Involved in the IPGA1- and AN-dependent regulation of pavement cells morphogenesis leading to puzzle shape. The protein is Katanin p60 ATPase-containing subunit A1 of Arabidopsis thaliana (Mouse-ear cress).